Here is a 226-residue protein sequence, read N- to C-terminus: Protein-L-isoaspartate O-methyltransferase (226 aa).

Serine 66 is a catalytic residue.

This sequence belongs to the methyltransferase superfamily. L-isoaspartyl/D-aspartyl protein methyltransferase family.

It localises to the cytoplasm. It carries out the reaction [protein]-L-isoaspartate + S-adenosyl-L-methionine = [protein]-L-isoaspartate alpha-methyl ester + S-adenosyl-L-homocysteine. Its function is as follows. Catalyzes the methyl esterification of L-isoaspartyl residues in peptides and proteins that result from spontaneous decomposition of normal L-aspartyl and L-asparaginyl residues. It plays a role in the repair and/or degradation of damaged proteins. The polypeptide is Protein-L-isoaspartate O-methyltransferase (Methanopyrus kandleri (strain AV19 / DSM 6324 / JCM 9639 / NBRC 100938)).